Consider the following 249-residue polypeptide: Isoprenyl transferase (249 aa).

Asp25 is an active-site residue. Position 25 (Asp25) interacts with Mg(2+). Residues 26 to 29, Trp30, Arg38, His42, and 70 to 72 each bind substrate; these read GNGR and STE. Residue Asn73 is the Proton acceptor of the active site. Substrate contacts are provided by residues Trp74, Arg76, Arg197, and 203–205; that span reads RLS. Glu216 serves as a coordination point for Mg(2+).

The protein belongs to the UPP synthase family. In terms of assembly, homodimer. Mg(2+) serves as cofactor.

Catalyzes the condensation of isopentenyl diphosphate (IPP) with allylic pyrophosphates generating different type of terpenoids. This chain is Isoprenyl transferase, found in Streptococcus pyogenes serotype M6 (strain ATCC BAA-946 / MGAS10394).